Consider the following 645-residue polypeptide: DNA mismatch repair protein MutL (645 aa).

Residues 371-403 are disordered; sequence VHDQKDKNHDVESHKNNLDSTSSTNNESTEVSN. The segment covering 372 to 387 has biased composition (basic and acidic residues); sequence HDQKDKNHDVESHKNN. Low complexity predominate over residues 390–402; that stretch reads STSSTNNESTEVS.

It belongs to the DNA mismatch repair MutL/HexB family.

Functionally, this protein is involved in the repair of mismatches in DNA. It is required for dam-dependent methyl-directed DNA mismatch repair. May act as a 'molecular matchmaker', a protein that promotes the formation of a stable complex between two or more DNA-binding proteins in an ATP-dependent manner without itself being part of a final effector complex. The sequence is that of DNA mismatch repair protein MutL from Staphylococcus epidermidis (strain ATCC 35984 / DSM 28319 / BCRC 17069 / CCUG 31568 / BM 3577 / RP62A).